Here is a 171-residue protein sequence, read N- to C-terminus: NADH-quinone oxidoreductase subunit B (171 aa).

[4Fe-4S] cluster contacts are provided by C34, C35, C99, and C128.

It belongs to the complex I 20 kDa subunit family. NDH-1 is composed of 14 different subunits. Subunits NuoB, C, D, E, F, and G constitute the peripheral sector of the complex. [4Fe-4S] cluster serves as cofactor.

It localises to the cell inner membrane. It carries out the reaction a quinone + NADH + 5 H(+)(in) = a quinol + NAD(+) + 4 H(+)(out). Its function is as follows. NDH-1 shuttles electrons from NADH, via FMN and iron-sulfur (Fe-S) centers, to quinones in the respiratory chain. The immediate electron acceptor for the enzyme in this species is believed to be ubiquinone. Couples the redox reaction to proton translocation (for every two electrons transferred, four hydrogen ions are translocated across the cytoplasmic membrane), and thus conserves the redox energy in a proton gradient. The protein is NADH-quinone oxidoreductase subunit B of Sulfurihydrogenibium sp. (strain YO3AOP1).